Here is a 113-residue protein sequence, read N- to C-terminus: N-alpha-acetyltransferase 38, NatC auxiliary subunit (113 aa).

Residues 1–29 form a disordered region; the sequence is MAAVLEENGCSRQSSPGAGDSDAEAGDTA. A Sm domain is found at 28 to 106; that stretch reads TARHKLESLL…IVSIQVELES (79 aa).

It belongs to the snRNP Sm proteins family. As to quaternary structure, component of the N-terminal acetyltransferase C (NatC) complex.

Its subcellular location is the cytoplasm. The protein resides in the nucleus. Its function is as follows. Auxillary component of the N-terminal acetyltransferase C (NatC) complex which catalyzes acetylation of N-terminal methionine residues. N-terminal acetylation protects proteins from ubiquitination and degradation by the N-end rule pathway. The sequence is that of N-alpha-acetyltransferase 38, NatC auxiliary subunit (naa38) from Xenopus tropicalis (Western clawed frog).